Reading from the N-terminus, the 593-residue chain is Kelch-like protein 2 (593 aa).

The tract at residues 1–28 is disordered; the sequence is METPPLPPACTKQGHQKPLDSKDDNTEK. The segment covering 17-28 has biased composition (basic and acidic residues); it reads KPLDSKDDNTEK. The BTB domain occupies 56–123; that stretch reads CDVTIVAEDM…VYTAEIQVTE (68 aa). 6 Kelch repeats span residues 308–353, 354–400, 402–447, 449–496, 497–543, and 545–591; these read LMVV…YMAG, LVFA…VLNG, LYAV…VVGG, LYAV…VLNN, LLYA…AVNG, and LYVV…VIDK.

As to quaternary structure, component of the BCR(KLHL2) E3 ubiquitin ligase complex, at least composed of CUL3 and KLHL2 and RBX1. Binds actin. Interacts with KLHL12. Interacts (via N-terminus) with FYN (via SH3 domain). As to expression, ubiquitous. Detected throughout the brain.

The protein localises to the cytoplasm. The protein resides in the cytoskeleton. It localises to the cell projection. It is found in the ruffle. Its subcellular location is the lamellipodium. The protein localises to the cytosol. It functions in the pathway protein modification; protein ubiquitination. Substrate-specific adapter of a BCR (BTB-CUL3-RBX1) E3 ubiquitin ligase complex that mediates the ubiquitination of target proteins, such as NPTXR, WNK1, WNK3 and WNK4, leading most often to their proteasomal degradation. The BCR(KLHL2) complex catalyzes ubiquitination and degradation of NPTXR. Responsible for degradative ubiquitination of the WNK kinases WNK1, WNK3 and WNK4. Plays a role in the reorganization of the actin cytoskeleton. Promotes growth of cell projections in oligodendrocyte precursors. This Homo sapiens (Human) protein is Kelch-like protein 2.